The primary structure comprises 455 residues: Ribosomal protein uS12 methylthiotransferase RimO (455 aa).

An MTTase N-terminal domain is found at 10 to 120 (PKVGMVSLGC…VVEAVHDAAP (111 aa)). Cysteine 19, cysteine 55, cysteine 84, cysteine 151, cysteine 155, and cysteine 158 together coordinate [4Fe-4S] cluster. One can recognise a Radical SAM core domain in the interval 137 to 380 (LTPRHYSYLK…MAKTAAISAA (244 aa)). The TRAM domain maps to 383–455 (EAKIGRTLPV…DEHDLFGVVT (73 aa)).

Belongs to the methylthiotransferase family. RimO subfamily. The cofactor is [4Fe-4S] cluster.

The protein localises to the cytoplasm. It catalyses the reaction L-aspartate(89)-[ribosomal protein uS12]-hydrogen + (sulfur carrier)-SH + AH2 + 2 S-adenosyl-L-methionine = 3-methylsulfanyl-L-aspartate(89)-[ribosomal protein uS12]-hydrogen + (sulfur carrier)-H + 5'-deoxyadenosine + L-methionine + A + S-adenosyl-L-homocysteine + 2 H(+). In terms of biological role, catalyzes the methylthiolation of an aspartic acid residue of ribosomal protein uS12. The polypeptide is Ribosomal protein uS12 methylthiotransferase RimO (Sphingopyxis alaskensis (strain DSM 13593 / LMG 18877 / RB2256) (Sphingomonas alaskensis)).